A 1207-amino-acid chain; its full sequence is Plasma membrane calcium-transporting ATPase 4 (1207 aa).

Over 1–100 (MTNPTEHTLP…KTFLELVWEA (100 aa)) the chain is Cytoplasmic. Position 13 is a phosphoserine (serine 13). The chain crosses the membrane as a helical span at residues 101 to 121 (LQDVTLIILEIAAIISLVLSF). Over 122–147 (YRPPGGENEQCGLAVTSPEDEGEAEA) the chain is Extracellular. The helical transmembrane segment at 148 to 168 (GWIEGAAILFSVIIVVLVTAF) threads the bilayer. The Cytoplasmic segment spans residues 169–368 (NDWSKEKQFR…LAVQIGKAGL (200 aa)). The tract at residues 294-317 (EEEKKKKGKKQGVPENRNKAKTQD) is disordered. Phosphoserine occurs at positions 328 and 334. A helical transmembrane segment spans residues 369–389 (IMSAITVLILILYFVIDNFVI). The Extracellular portion of the chain corresponds to 390–408 (QRRPWLAECTPIYVQYFVK). The chain crosses the membrane as a helical span at residues 409 to 429 (FFIIGVTVLVVAVPEGLPLAV). Residues 430–843 (TISLAYSVKK…RNVYDSISKF (414 aa)) lie on the Cytoplasmic side of the membrane. Aspartate 465 acts as the 4-aspartylphosphate intermediate in catalysis. Positions 785 and 789 each coordinate Mg(2+). Residues 844 to 864 (LQFQLTVNVVAVIVAFTGACI) form a helical membrane-spanning segment. The Extracellular portion of the chain corresponds to 865–871 (TQDSPLK). The chain crosses the membrane as a helical span at residues 872-892 (AVQMLWVNLIMDTFASLALAT). The Cytoplasmic portion of the chain corresponds to 893–918 (EPPTDSLLKRRPYGRNKPLISRTMMK). A helical membrane pass occupies residues 919–939 (NILGHAVYQLTVIFFLVFAGE). The Extracellular segment spans residues 940–957 (KFFDIDSGRRAPLHSPPS). A helical membrane pass occupies residues 958–977 (QHYTIIFNTFVLMQLFNEIN). Topologically, residues 978–994 (SRKIHGERNVFSGIFRN) are cytoplasmic. A helical membrane pass occupies residues 995–1015 (LIFCSVVLGTFISQIIIVEFG). Over 1016 to 1028 (GKPFSCTKLTLSQ) the chain is Extracellular. Residues 1029 to 1049 (WFWCLFIGIGELLWGQVISTI) form a helical membrane-spanning segment. Over 1050-1207 (PTQSLKFLKE…SPLHSLETSV (158 aa)) the chain is Cytoplasmic. The tract at residues 1086-1103 (LRRGQILWFRGLNRIQTQ) is calmodulin-binding subdomain A. Threonine 1102 carries the post-translational modification Phosphothreonine; by PKC. The segment at 1104-1113 (IKVVKAFHSS) is calmodulin-binding subdomain B. Positions 1159 to 1181 (VSKPGTKTSSLDGEVTPQTNKNN) are disordered. Positions 1163–1181 (GTKTSSLDGEVTPQTNKNN) are enriched in polar residues.

The protein belongs to the cation transport ATPase (P-type) (TC 3.A.3) family. Type IIB subfamily. Interacts with PDZD11. Interacts with SLC35G1 and STIM1. Interacts with calmodulin. As to expression, isoform 1 is detected in brain, heart, liver, testis and epididymis. Isoform 2 is detected in brain (at protein level), heart, seminal vesicle and epididymis. There is a shift in expression from isoform 1 to isoform 2 along the length of the epididymis from caput to cauda (at protein level).

The protein localises to the cell membrane. The protein resides in the cell projection. It is found in the cilium. Its subcellular location is the flagellum membrane. The catalysed reaction is Ca(2+)(in) + ATP + H2O = Ca(2+)(out) + ADP + phosphate + H(+). Its activity is regulated as follows. Activated by calcium/calmodulin. Functionally, calcium/calmodulin-regulated and magnesium-dependent enzyme that catalyzes the hydrolysis of ATP coupled with the transport of calcium out of the cell. By regulating sperm cells calcium homeostasis, may play a role in sperm motility. The chain is Plasma membrane calcium-transporting ATPase 4 from Bos taurus (Bovine).